We begin with the raw amino-acid sequence, 562 residues long: Arginine--tRNA ligase 1 (562 aa).

Positions Pro122–His132 match the 'HIGH' region motif.

The protein belongs to the class-I aminoacyl-tRNA synthetase family. As to quaternary structure, monomer.

It is found in the cytoplasm. The catalysed reaction is tRNA(Arg) + L-arginine + ATP = L-arginyl-tRNA(Arg) + AMP + diphosphate. This Bacillus cereus (strain ZK / E33L) protein is Arginine--tRNA ligase 1.